The sequence spans 328 residues: Beta-ribofuranosylphenol 5'-phosphate synthase (328 aa).

Belongs to the beta-RFA-P synthase family. In terms of assembly, homodimer. It depends on Mg(2+) as a cofactor.

The enzyme catalyses 5-phospho-alpha-D-ribose 1-diphosphate + 4-hydroxybenzoate + H(+) = 4-(beta-D-ribofuranosyl)phenol 5'-phosphate + CO2 + diphosphate. The catalysed reaction is 4-aminobenzoate + 5-phospho-alpha-D-ribose 1-diphosphate + H(+) = 4-(beta-D-ribofuranosyl)aminobenzene 5'-phosphate + CO2 + diphosphate. It participates in cofactor biosynthesis; 5,6,7,8-tetrahydromethanopterin biosynthesis. Functionally, catalyzes the condensation of 4-hydroxybenzoate (HB) with 5-phospho-alpha-D-ribose 1-diphosphate (PRPP) to produce beta-ribofuranosylphenol 5'-phosphate (beta-RFH-P). Also catalyzes the condensation of 4-aminobenzoate (pABA) with PRPP to produce beta-ribofuranosylaminobenzene 5'-phosphate (beta-RFA-P). Only 4-hydroxybenzoate is known to be biosynthesized by methanogenic archaea, but 4-aminobenzoate can be used as substrate by growing methanogens when it is present in the growth medium. This chain is Beta-ribofuranosylphenol 5'-phosphate synthase, found in Methanocaldococcus jannaschii (strain ATCC 43067 / DSM 2661 / JAL-1 / JCM 10045 / NBRC 100440) (Methanococcus jannaschii).